The following is a 208-amino-acid chain: FMN-dependent NADH:quinone oxidoreductase (208 aa).

Residues serine 9 and 15-17 each bind FMN; that span reads SHS.

Belongs to the azoreductase type 1 family. As to quaternary structure, homodimer. FMN is required as a cofactor.

The catalysed reaction is 2 a quinone + NADH + H(+) = 2 a 1,4-benzosemiquinone + NAD(+). It catalyses the reaction N,N-dimethyl-1,4-phenylenediamine + anthranilate + 2 NAD(+) = 2-(4-dimethylaminophenyl)diazenylbenzoate + 2 NADH + 2 H(+). In terms of biological role, quinone reductase that provides resistance to thiol-specific stress caused by electrophilic quinones. Its function is as follows. Also exhibits azoreductase activity. Catalyzes the reductive cleavage of the azo bond in aromatic azo compounds to the corresponding amines. This is FMN-dependent NADH:quinone oxidoreductase from Bordetella petrii (strain ATCC BAA-461 / DSM 12804 / CCUG 43448).